Here is a 1129-residue protein sequence, read N- to C-terminus: Eukaryotic translation initiation factor 3 subunit A (1129 aa).

One can recognise a PCI domain in the interval 319–502 (LQRMAAHVLL…NSIYFGTDLT (184 aa)). Disordered regions lie at residues 590–633 (NNAR…NEIQ) and 836–1129 (AAEA…VKRR). Composition is skewed to basic and acidic residues over residues 836–903 (AAEA…RSER), 923–964 (DRND…KDTD), 971–985 (WRVR…RERG), 994–1044 (GRDD…DQPQ), and 1053–1076 (DSPR…RDIR). A compositionally biased stretch (gly residues) spans 1080–1091 (PKEGGGGGGGGN). Residues 1098 to 1119 (PRDEKPPVKRDQPQDKENKAGD) are compositionally biased toward basic and acidic residues.

It belongs to the eIF-3 subunit A family. Component of the eukaryotic translation initiation factor 3 (eIF-3) complex. The eIF-3 complex interacts with pix.

Its subcellular location is the cytoplasm. Its function is as follows. RNA-binding component of the eukaryotic translation initiation factor 3 (eIF-3) complex, which is involved in protein synthesis of a specialized repertoire of mRNAs and, together with other initiation factors, stimulates binding of mRNA and methionyl-tRNAi to the 40S ribosome. The eIF-3 complex specifically targets and initiates translation of a subset of mRNAs involved in cell proliferation. The protein is Eukaryotic translation initiation factor 3 subunit A of Drosophila mojavensis (Fruit fly).